We begin with the raw amino-acid sequence, 185 residues long: Large ribosomal subunit protein uL6 (185 aa).

This sequence belongs to the universal ribosomal protein uL6 family. As to quaternary structure, part of the 50S ribosomal subunit.

In terms of biological role, this protein binds to the 23S rRNA, and is important in its secondary structure. It is located near the subunit interface in the base of the L7/L12 stalk, and near the tRNA binding site of the peptidyltransferase center. This chain is Large ribosomal subunit protein uL6, found in Deinococcus deserti (strain DSM 17065 / CIP 109153 / LMG 22923 / VCD115).